We begin with the raw amino-acid sequence, 161 residues long: Probable ubiquitin-conjugating enzyme E2 16 (161 aa).

The UBC core domain occupies 15-161; it reads IATNRLQKEL…TRWWFHDDKV (147 aa). Cys99 (glycyl thioester intermediate) is an active-site residue.

It belongs to the ubiquitin-conjugating enzyme family.

The enzyme catalyses S-ubiquitinyl-[E1 ubiquitin-activating enzyme]-L-cysteine + [E2 ubiquitin-conjugating enzyme]-L-cysteine = [E1 ubiquitin-activating enzyme]-L-cysteine + S-ubiquitinyl-[E2 ubiquitin-conjugating enzyme]-L-cysteine.. It participates in protein modification; protein ubiquitination. In terms of biological role, accepts the ubiquitin from the E1 complex and catalyzes its covalent attachment to other proteins. This chain is Probable ubiquitin-conjugating enzyme E2 16 (UBC16), found in Arabidopsis thaliana (Mouse-ear cress).